The chain runs to 478 residues: Putative malate transporter YflS (478 aa).

A run of 12 helical transmembrane segments spans residues 12 to 31 (AVKL…IWFI), 41 to 57 (AWHL…GFIS), 64 to 81 (AIAI…TLSI), 96 to 118 (IVIA…ISYV), 187 to 209 (GFQG…PLIA), 222 to 244 (WTSW…PLVI), 277 to 296 (LSMV…GGSF), 300 to 319 (ATTT…VLTW), 332 to 354 (LTWF…VSWF), 364 to 386 (GFSW…YFFA), 398 to 420 (AFLA…LAFI), and 450 to 472 (WSIG…GLWW).

Belongs to the SLC13A/DASS transporter (TC 2.A.47) family. DIT1 subfamily.

It localises to the cell membrane. Functionally, might be a malate transporter. This chain is Putative malate transporter YflS (yflS), found in Bacillus subtilis (strain 168).